Here is a 167-residue protein sequence, read N- to C-terminus: Peptide deformylase (167 aa).

2 residues coordinate Fe cation: C91 and H133. E134 is an active-site residue. Residue H137 participates in Fe cation binding.

Belongs to the polypeptide deformylase family. Fe(2+) serves as cofactor.

It catalyses the reaction N-terminal N-formyl-L-methionyl-[peptide] + H2O = N-terminal L-methionyl-[peptide] + formate. Removes the formyl group from the N-terminal Met of newly synthesized proteins. Requires at least a dipeptide for an efficient rate of reaction. N-terminal L-methionine is a prerequisite for activity but the enzyme has broad specificity at other positions. In Chromobacterium violaceum (strain ATCC 12472 / DSM 30191 / JCM 1249 / CCUG 213 / NBRC 12614 / NCIMB 9131 / NCTC 9757 / MK), this protein is Peptide deformylase.